A 470-amino-acid chain; its full sequence is 3-isopropylmalate dehydratase large subunit (470 aa).

Positions 50-121 (NVARGCQHRH…PCGRPGAGRH (72 aa)) are disordered. 3 residues coordinate [4Fe-4S] cluster: cysteine 349, cysteine 409, and cysteine 412.

It belongs to the aconitase/IPM isomerase family. LeuC type 1 subfamily. As to quaternary structure, heterodimer of LeuC and LeuD. Requires [4Fe-4S] cluster as cofactor.

The enzyme catalyses (2R,3S)-3-isopropylmalate = (2S)-2-isopropylmalate. The protein operates within amino-acid biosynthesis; L-leucine biosynthesis; L-leucine from 3-methyl-2-oxobutanoate: step 2/4. In terms of biological role, catalyzes the isomerization between 2-isopropylmalate and 3-isopropylmalate, via the formation of 2-isopropylmaleate. This is 3-isopropylmalate dehydratase large subunit from Azotobacter vinelandii.